A 159-amino-acid chain; its full sequence is Ribosomal RNA large subunit methyltransferase H (159 aa).

S-adenosyl-L-methionine contacts are provided by residues glycine 108 and 127 to 132; that span reads FSKMTF.

This sequence belongs to the RNA methyltransferase RlmH family. Homodimer.

The protein resides in the cytoplasm. It catalyses the reaction pseudouridine(1915) in 23S rRNA + S-adenosyl-L-methionine = N(3)-methylpseudouridine(1915) in 23S rRNA + S-adenosyl-L-homocysteine + H(+). In terms of biological role, specifically methylates the pseudouridine at position 1915 (m3Psi1915) in 23S rRNA. This Clostridium beijerinckii (strain ATCC 51743 / NCIMB 8052) (Clostridium acetobutylicum) protein is Ribosomal RNA large subunit methyltransferase H.